The following is a 337-amino-acid chain: Inositol 2-dehydrogenase 1 (337 aa).

The protein belongs to the Gfo/Idh/MocA family. Homotetramer.

The enzyme catalyses myo-inositol + NAD(+) = scyllo-inosose + NADH + H(+). In terms of biological role, involved in the oxidation of myo-inositol (MI) to 2-keto-myo-inositol (2KMI or 2-inosose). The protein is Inositol 2-dehydrogenase 1 of Saccharopolyspora erythraea (strain ATCC 11635 / DSM 40517 / JCM 4748 / NBRC 13426 / NCIMB 8594 / NRRL 2338).